The chain runs to 207 residues: Large ribosomal subunit protein uL4 (207 aa).

Residues 49–78 (HAVKNRSAVSGGGRKPWRQKGTGRARQGSI) are disordered.

It belongs to the universal ribosomal protein uL4 family. As to quaternary structure, part of the 50S ribosomal subunit.

In terms of biological role, one of the primary rRNA binding proteins, this protein initially binds near the 5'-end of the 23S rRNA. It is important during the early stages of 50S assembly. It makes multiple contacts with different domains of the 23S rRNA in the assembled 50S subunit and ribosome. Forms part of the polypeptide exit tunnel. The chain is Large ribosomal subunit protein uL4 from Streptococcus pyogenes serotype M49 (strain NZ131).